A 381-amino-acid polypeptide reads, in one-letter code: Alcohol dehydrogenase class-3 (381 aa).

C49 serves as a coordination point for Zn(2+). Residue H50 participates in NAD(+) binding. An alcohol is bound by residues T51 and H71. Residues H71, E72, C101, C104, C107, C115, and C179 each coordinate Zn(2+). NAD(+) contacts are provided by residues 204–209 (GLGTVG), D228, K233, I274, 297–299 (VGV), 322–324 (TAF), and R374.

It belongs to the zinc-containing alcohol dehydrogenase family. Class-III subfamily. In terms of assembly, homodimer. Requires Zn(2+) as cofactor. As to expression, expressed at low levels in the leaves.

Its subcellular location is the cytoplasm. It catalyses the reaction a primary alcohol + NAD(+) = an aldehyde + NADH + H(+). The catalysed reaction is a secondary alcohol + NAD(+) = a ketone + NADH + H(+). It carries out the reaction S-(hydroxymethyl)glutathione + NADP(+) = S-formylglutathione + NADPH + H(+). The enzyme catalyses S-(hydroxymethyl)glutathione + NAD(+) = S-formylglutathione + NADH + H(+). The sequence is that of Alcohol dehydrogenase class-3 (FDH) from Zea mays (Maize).